The primary structure comprises 431 residues: 3-isopropylmalate dehydratase large subunit (431 aa).

Cys-308, Cys-368, and Cys-371 together coordinate [4Fe-4S] cluster.

Belongs to the aconitase/IPM isomerase family. LeuC type 2 subfamily. Heterodimer of LeuC and LeuD. [4Fe-4S] cluster serves as cofactor.

It carries out the reaction (2R,3S)-3-isopropylmalate = (2S)-2-isopropylmalate. It functions in the pathway amino-acid biosynthesis; L-leucine biosynthesis; L-leucine from 3-methyl-2-oxobutanoate: step 2/4. Catalyzes the isomerization between 2-isopropylmalate and 3-isopropylmalate, via the formation of 2-isopropylmaleate. This is 3-isopropylmalate dehydratase large subunit from Desulfosudis oleivorans (strain DSM 6200 / JCM 39069 / Hxd3) (Desulfococcus oleovorans).